The chain runs to 347 residues: Dehydratase asqC (347 aa).

The signal sequence occupies residues 1–18 (MRPAILAAFSTLPAAAKA). N-linked (GlcNAc...) asparagine glycosylation is found at Asn51, Asn103, Asn131, Asn143, Asn215, Asn264, and Asn281.

The enzyme catalyses [(1'E)-5'-(3',3'-dimethyloxiran-2'-yl)-3'-hydroxy-3'-methylpent-1'-en-1'-yl]-quinolinone B = (1'E,3'E)-5-(3,3-dimethyloxiran-2-yl)-3-methylhexa-1,3-dienyl-quinolinone B + H2O. It functions in the pathway secondary metabolite biosynthesis. Its pathway is alkaloid biosynthesis. The protein operates within mycotoxin biosynthesis. Its function is as follows. Dehydratase; part of the gene cluster that mediates the biosynthesis of the aspoquinolone mycotoxins. Within the pathway, the dehydratase asqC catalyzes the dehydratation of the epoxide at C-3 to produce (1'E,3'E)-5-(3,3-dimethyloxiran-2-yl)-3-methylhexa-1,3-dienyl-quinolinone B. The first step of the pathway is catalyzed by the nonribosomal peptide synthetase asqK that condenses anthranilic acid and O-methyl-L-tyrosine to produce 4'-methoxycyclopeptin. 4'-methoxycyclopeptin is then converted to 4'-methoxydehydrocyclopeptin by the ketoglutarate-dependent dioxygenase asqJ. AsqJ also converts its first product 4'-methoxydehydrocyclopeptin to 4'-methoxycyclopenin. The following conversion of 4'-methoxycyclopenin into 4'-methoxyviridicatin is catalyzed by the cyclopenase asqI. 4'-methoxyviridicatin is the precursor of quinolone natural products, and is further converted to quinolinone B. The prenyltransferase asqH1 then catalyzes the canonical Friedel-Crafts alkylation of quinolinone B with dimethylallyl cation to yield dimethylallyl quinolone, which is subjected to FAD-dependent dehydrogenation by the FAD-linked oxidoreductase asqF to yield conjugated aryl diene. The delta(3') double bond then serves as the site of the second alkylation with DMAPP catalyzed by the prenyltransferase asqH2 to yield a carbenium ion intermediate, which can be attacked by H(2)O to yield a styrenyl quinolone containing a C3'-hydroxyprenyl chain. The FAD-dependent monooxygenase asqG performs epoxidation of the terminal C7'-C8' olefin. Finally, after dehydratation of the epoxide at C3 by asqC, the quinolone epoxide rearrangement protein asqO catalyzes an enzymatic 3-exo-tet cyclization to yield the cyclopropyl-THF ring system in aspoquinolone. The chain is Dehydratase asqC from Emericella nidulans (strain FGSC A4 / ATCC 38163 / CBS 112.46 / NRRL 194 / M139) (Aspergillus nidulans).